The chain runs to 564 residues: uncharacterized protein (564 aa).

A run of 8 helical transmembrane segments spans residues 12-32 (TYYLWIALFLLLLYVSPLFIL), 97-119 (MTAYAISQTVTRVVAFFGMYVLL), 139-161 (AFALTPFWPSGMLSTLGYPLALW), 188-208 (FVLGFFFFLAGMACFWLYDAI), 213-233 (WNLMFLGSIAFMTSIYLFVEY), 277-297 (MTVHTVVILPILMVVFAALLF), 306-326 (NVYLFLCVLNYGLSLWYAFWF), and 348-368 (FHFLRPLVIYVSFALALYLIW).

Its subcellular location is the cell membrane. This is an uncharacterized protein from Bacillus subtilis (strain 168).